A 353-amino-acid chain; its full sequence is GTPase Obg (353 aa).

An Obg domain is found at 1-159; sequence MKFVDEVRIH…RDLVLELKLL (159 aa). The region spanning 160–333 is the OBG-type G domain; the sequence is ADVGIVGYPN…LMDAVGRALY (174 aa). GTP is bound by residues 166 to 173, 191 to 195, 212 to 215, 283 to 286, and 314 to 316; these read GYPNAGKS, FTTLV, DIPG, TKID, and SAV. The Mg(2+) site is built by Ser173 and Thr193.

It belongs to the TRAFAC class OBG-HflX-like GTPase superfamily. OBG GTPase family. Monomer. It depends on Mg(2+) as a cofactor.

It is found in the cytoplasm. In terms of biological role, an essential GTPase which binds GTP, GDP and possibly (p)ppGpp with moderate affinity, with high nucleotide exchange rates and a fairly low GTP hydrolysis rate. Plays a role in control of the cell cycle, stress response, ribosome biogenesis and in those bacteria that undergo differentiation, in morphogenesis control. The chain is GTPase Obg from Anaeromyxobacter sp. (strain Fw109-5).